A 110-amino-acid polypeptide reads, in one-letter code: ATP synthase subunit c (110 aa).

Transmembrane regions (helical) follow at residues 4 to 24 (FFVI…VFAA), 37 to 57 (ATAG…AGMG), and 81 to 101 (FIVG…FVLI).

It belongs to the ATPase C chain family. As to quaternary structure, F-type ATPases have 2 components, F(1) - the catalytic core - and F(0) - the membrane proton channel. F(1) has five subunits: alpha(3), beta(3), gamma(1), delta(1), epsilon(1). F(0) has three main subunits: a(1), b(2) and c(10-14). The alpha and beta chains form an alternating ring which encloses part of the gamma chain. F(1) is attached to F(0) by a central stalk formed by the gamma and epsilon chains, while a peripheral stalk is formed by the delta and b chains.

The protein resides in the cell inner membrane. Functionally, f(1)F(0) ATP synthase produces ATP from ADP in the presence of a proton or sodium gradient. F-type ATPases consist of two structural domains, F(1) containing the extramembraneous catalytic core and F(0) containing the membrane proton channel, linked together by a central stalk and a peripheral stalk. During catalysis, ATP synthesis in the catalytic domain of F(1) is coupled via a rotary mechanism of the central stalk subunits to proton translocation. Its function is as follows. Key component of the F(0) channel; it plays a direct role in translocation across the membrane. A homomeric c-ring of between 10-14 subunits forms the central stalk rotor element with the F(1) delta and epsilon subunits. In Thermodesulfovibrio yellowstonii (strain ATCC 51303 / DSM 11347 / YP87), this protein is ATP synthase subunit c.